Consider the following 546-residue polypeptide: Cytokine-like nuclear factor N-PAC (546 aa).

Positions 8 to 66 constitute a PWWP domain; it reads LGDLVWGKLGRYPPWPGKIVNPPKDLKKPRGKKCFFVKFFGTEDHAWIKVEQLKPYHAH. 2 stretches are compositionally biased toward basic and acidic residues: residues 91 to 145 and 161 to 181; these read RRAK…EGKK and RAQE…KDLT. The interval 91 to 187 is disordered; that stretch reads RRAKGKDQTS…KDLTIPESST (97 aa). Ser130 is modified (phosphoserine). Lys135 participates in a covalent cross-link: Glycyl lysine isopeptide (Lys-Gly) (interchain with G-Cter in SUMO2). At Ser166 the chain carries Phosphoserine. The segment at residues 167–179 is a DNA-binding region (a.T hook); the sequence is PRKRGRPPKDEKD. Glycyl lysine isopeptide (Lys-Gly) (interchain with G-Cter in SUMO2) cross-links involve residues Lys175, Lys178, Lys200, and Lys210. Residues 213–216 form an interaction with histone H3 region; the sequence is DPHF. The interaction with KDM1B stretch occupies residues 215-224; sequence HFHHFLLSQT. Glycyl lysine isopeptide (Lys-Gly) (interchain with G-Cter in SUMO2) cross-links involve residues Lys226, Lys236, Lys239, and Lys268. Positions 260–546 are dehydrogenase domain; it reads GSITPTDKKI…MSAVYRAYIH (287 aa). 270-284 provides a ligand contact to NAD(+); the sequence is GFLGLGLMGSGIVSN. Lys301 participates in a covalent cross-link: Glycyl lysine isopeptide (Lys-Gly) (interchain with G-Cter in SUMO2). Residues Thr355 and Lys498 each contribute to the NAD(+) site. Ser533 bears the Phosphoserine mark.

It belongs to the HIBADH-related family. NP60 subfamily. Homotetramere. Interacts with MAPK14. Interacts with KDM1B at nucleosomes; this interaction stimulates H3K4me1 and H3K4me2 demethylation. Binds to mononucleosomes. Interacts with GATA4; the interaction is required for a synergistic activation of GATA4 target genes transcription.

The protein localises to the nucleus. It is found in the chromosome. Its function is as follows. Cytokine-like nuclear factor with chromatin gene reader activity involved in chromatin modification and regulation of gene expression. Acts as a nucleosome-destabilizing factor that is recruited to genes during transcriptional activation. Recognizes and binds histone H3 without a preference for specific epigenetic markers and also binds DNA. Interacts with KDM1B and promotes its histone demethylase activity by facilitating the capture of H3 tails, they form a multifunctional enzyme complex that modifies transcribed chromatin and facilitates Pol II transcription through nucleosomes. Stimulates the acetylation of 'Lys-56' of nucleosomal histone H3 (H3K56ac) by EP300. With GATA4, co-binds a defined set of heart development genes and coregulates their expression during cardiomyocyte differentiation. Regulates p38 MAP kinase activity by mediating stress activation of MAPK14/p38alpha and specifically regulating MAPK14 signaling. Indirectly promotes phosphorylation of MAPK14 and activation of ATF2. The phosphorylation of MAPK14 requires upstream activity of MAP2K4 and MAP2K6. This is Cytokine-like nuclear factor N-PAC from Mus musculus (Mouse).